The sequence spans 563 residues: Arylsulfatase K (563 aa).

The signal sequence occupies residues 1-17; that stretch reads MLLLLVSVIVALALVAP. Residues Asp-40 and Cys-80 each coordinate Ca(2+). The active-site Nucleophile is Cys-80. Position 80 is a 3-oxoalanine (Cys) (Cys-80). Asn-108 is a glycosylation site (N-linked (GlcNAc...) asparagine). Lys-128 is a substrate binding site. Residue Asn-191 is glycosylated (N-linked (GlcNAc...) asparagine). Residue His-249 coordinates substrate. N-linked (GlcNAc...) asparagine glycosylation is present at Asn-260. Residues Asp-311 and His-312 each coordinate Ca(2+). N-linked (GlcNAc...) asparagine glycans are attached at residues Asn-373, Asn-411, and Asn-496.

The protein belongs to the sulfatase family. Requires Ca(2+) as cofactor. Post-translationally, the conversion to 3-oxoalanine (also known as C-formylglycine, FGly), of a serine or cysteine residue in prokaryotes and of a cysteine residue in eukaryotes, is critical for catalytic activity. The 75-kDa precursor undergoes proteolytic processing to yield a 23 kDa form. In terms of processing, N-glycosylated with both high mannose and complex type sugars.

The protein resides in the secreted. It is found in the lysosome. The enzyme catalyses an aryl sulfate + H2O = a phenol + sulfate + H(+). It carries out the reaction Hydrolysis of the 2-sulfate groups of the 2-O-sulfo-D-glucuronate residues of chondroitin sulfate, heparin and heparitin sulfate.. Catalyzes the hydrolysis of pseudosubstrates such as p-nitrocatechol sulfate and p-nitrophenyl sulfate. Catalyzes the hydrolysis of the 2-sulfate groups of the 2-O-sulfo-D-glucuronate residues of chondroitin sulfate, heparin and heparitin sulfate. Acts selectively on 2-sulfoglucuronate and lacks activity against 2-sulfoiduronate. This is Arylsulfatase K (Arsk) from Rattus norvegicus (Rat).